Reading from the N-terminus, the 276-residue chain is Digeranylgeranylglyceryl phosphate synthase (276 aa).

A run of 8 helical transmembrane segments spans residues 12 to 34 (PHNCALAGLVGVLGSMVALGSVP), 38 to 60 (ILILVFLVVSLGCAGGNTINDYF), 84 to 104 (ALWYSLFLFAVGLALALLISL), 107 to 127 (FAFALLAYITMFLYAWKLKPL), 146 to 166 (GAIAVGKIGLAGTLAVCAFLV), 202 to 222 (VAAFFGVATVIASFLPVKAGV), 224 to 244 (VGYYAMVPVDLIILYAVYLIL), and 256 to 276 (QLLLKASIFLAVFAFLIAALM).

This sequence belongs to the UbiA prenyltransferase family. DGGGP synthase subfamily. Requires Mg(2+) as cofactor.

The protein resides in the cell membrane. It carries out the reaction sn-3-O-(geranylgeranyl)glycerol 1-phosphate + (2E,6E,10E)-geranylgeranyl diphosphate = 2,3-bis-O-(geranylgeranyl)-sn-glycerol 1-phosphate + diphosphate. The protein operates within membrane lipid metabolism; glycerophospholipid metabolism. Functionally, prenyltransferase that catalyzes the transfer of the geranylgeranyl moiety of geranylgeranyl diphosphate (GGPP) to the C2 hydroxyl of (S)-3-O-geranylgeranylglyceryl phosphate (GGGP). This reaction is the second ether-bond-formation step in the biosynthesis of archaeal membrane lipids. The sequence is that of Digeranylgeranylglyceryl phosphate synthase from Thermococcus gammatolerans (strain DSM 15229 / JCM 11827 / EJ3).